Consider the following 333-residue polypeptide: Phosphate acyltransferase (333 aa).

This sequence belongs to the PlsX family. In terms of assembly, homodimer. Probably interacts with PlsY.

Its subcellular location is the cytoplasm. The enzyme catalyses a fatty acyl-[ACP] + phosphate = an acyl phosphate + holo-[ACP]. It functions in the pathway lipid metabolism; phospholipid metabolism. In terms of biological role, catalyzes the reversible formation of acyl-phosphate (acyl-PO(4)) from acyl-[acyl-carrier-protein] (acyl-ACP). This enzyme utilizes acyl-ACP as fatty acyl donor, but not acyl-CoA. The protein is Phosphate acyltransferase of Clostridium botulinum (strain Alaska E43 / Type E3).